The following is a 320-amino-acid chain: Cytochrome f (320 aa).

Residues 1-35 form the signal peptide; that stretch reads MQTRNTFSWIREEITRSISVLLMIYIITWASISSA. Positions 36, 56, 59, and 60 each coordinate heme. Residues 286–306 form a helical membrane-spanning segment; the sequence is VQGLLFFLGSVVLAQIFLVLK.

This sequence belongs to the cytochrome f family. As to quaternary structure, the 4 large subunits of the cytochrome b6-f complex are cytochrome b6, subunit IV (17 kDa polypeptide, petD), cytochrome f and the Rieske protein, while the 4 small subunits are PetG, PetL, PetM and PetN. The complex functions as a dimer. Heme is required as a cofactor.

Its subcellular location is the plastid. The protein localises to the chloroplast thylakoid membrane. In terms of biological role, component of the cytochrome b6-f complex, which mediates electron transfer between photosystem II (PSII) and photosystem I (PSI), cyclic electron flow around PSI, and state transitions. This Lobularia maritima (Sweet alyssum) protein is Cytochrome f.